Here is a 165-residue protein sequence, read N- to C-terminus: MQQVKIYTASPSDLSPPVQSESFCVDLVLASDYRELEAKCAALVVENGALKKSEVEFNDYCRHECEDVGDTWVDDFTETPATDAFLAEMRAQAHKEGAYFVANRMLAAWDAGFIDDTAKNAADIARMILTSTEFMADAPEGDFDRSFADGVIEDIAAQLRKGVQS.

This Salmonella phage P22 (Bacteriophage P22) protein is Eae protein (eae).